Consider the following 261-residue polypeptide: High-affinity zinc uptake system membrane protein ZnuB (261 aa).

At 1–7 the chain is on the periplasmic side; the sequence is MIELLFP. Residues 8 to 28 form a helical membrane-spanning segment; it reads GWLAGIMLACAAGPLGSFVVW. At 29–53 the chain is on the cytoplasmic side; it reads RRMSYFGDTLAHASLLGVAFGLLLD. Residues 54-74 traverse the membrane as a helical segment; that stretch reads VNPFYAVIAVTLLLAGGLVWL. The Periplasmic segment spans residues 75-83; the sequence is EKRPQLAID. The chain crosses the membrane as a helical span at residues 84–104; it reads TLLGIMAHSALSLGLVVVSLM. At 105–121 the chain is on the cytoplasmic side; that stretch reads SNIRVDLMAYLFGDLLA. Residues 122 to 142 form a helical membrane-spanning segment; the sequence is VTPEDLISIAIGVVIVVAILF. At 143 to 177 the chain is on the periplasmic side; it reads WQWRNLLSMTISPDLAFVDGVKLQRVKLLLMLVTA. A helical membrane pass occupies residues 178-198; that stretch reads LTIGVAMKFVGALIITSLLII. At 199-213 the chain is on the cytoplasmic side; the sequence is PAATARRFARTPEQM. A helical membrane pass occupies residues 214–234; sequence AGVAVLVGMVAVTGGLTFSAV. Residue tyrosine 235 is a topological domain, periplasmic. Residues 236–256 form a helical membrane-spanning segment; sequence DTPAGPSVVLCAALLFILSMM. The Cytoplasmic portion of the chain corresponds to 257–261; the sequence is KKQAS.

Belongs to the ABC-3 integral membrane protein family.

The protein localises to the cell inner membrane. Involved in the high-affinity zinc uptake transport system. The polypeptide is High-affinity zinc uptake system membrane protein ZnuB (znuB) (Escherichia coli (strain K12)).